A 390-amino-acid polypeptide reads, in one-letter code: GTPase Obg (390 aa).

Positions 1–159 constitute an Obg domain; it reads MKFVDEAAIL…RELMLELLLL (159 aa). The region spanning 160-333 is the OBG-type G domain; sequence ADVGMLGLPN…LCWDVMSFLN (174 aa). GTP-binding positions include 166–173, 191–195, 213–216, 283–286, and 314–316; these read GLPNAGKS, FTTLI, DIPG, NKID, and SAA. Residues Ser173 and Thr193 each coordinate Mg(2+). The span at 364–384 shows a compositional bias: acidic residues; that stretch reads VEAEAEDDWDDDWDEEDDDGV. Residues 364 to 390 form a disordered region; that stretch reads VEAEAEDDWDDDWDEEDDDGVEIIYER.

The protein belongs to the TRAFAC class OBG-HflX-like GTPase superfamily. OBG GTPase family. As to quaternary structure, monomer. Mg(2+) serves as cofactor.

It is found in the cytoplasm. An essential GTPase which binds GTP, GDP and possibly (p)ppGpp with moderate affinity, with high nucleotide exchange rates and a fairly low GTP hydrolysis rate. Plays a role in control of the cell cycle, stress response, ribosome biogenesis and in those bacteria that undergo differentiation, in morphogenesis control. This Yersinia pestis protein is GTPase Obg.